We begin with the raw amino-acid sequence, 339 residues long: Undecaprenyl-phosphate 4-deoxy-4-formamido-L-arabinose transferase (339 aa).

Transmembrane regions (helical) follow at residues 235–255 (LSLV…FLLV) and 269–289 (LFVL…GMGL).

The protein belongs to the glycosyltransferase 2 family.

Its subcellular location is the cell inner membrane. The enzyme catalyses UDP-4-deoxy-4-formamido-beta-L-arabinose + di-trans,octa-cis-undecaprenyl phosphate = 4-deoxy-4-formamido-alpha-L-arabinopyranosyl di-trans,octa-cis-undecaprenyl phosphate + UDP. The protein operates within glycolipid biosynthesis; 4-amino-4-deoxy-alpha-L-arabinose undecaprenyl phosphate biosynthesis; 4-amino-4-deoxy-alpha-L-arabinose undecaprenyl phosphate from UDP-4-deoxy-4-formamido-beta-L-arabinose and undecaprenyl phosphate: step 1/2. It participates in bacterial outer membrane biogenesis; lipopolysaccharide biosynthesis. Functionally, catalyzes the transfer of 4-deoxy-4-formamido-L-arabinose from UDP to undecaprenyl phosphate. The modified arabinose is attached to lipid A and is required for resistance to polymyxin and cationic antimicrobial peptides. The polypeptide is Undecaprenyl-phosphate 4-deoxy-4-formamido-L-arabinose transferase (Pseudomonas paraeruginosa (strain DSM 24068 / PA7) (Pseudomonas aeruginosa (strain PA7))).